The following is a 311-amino-acid chain: 4-hydroxy-3-methylbut-2-enyl diphosphate reductase (311 aa).

Residue cysteine 12 participates in [4Fe-4S] cluster binding. Residues histidine 41 and histidine 74 each coordinate (2E)-4-hydroxy-3-methylbut-2-enyl diphosphate. Dimethylallyl diphosphate contacts are provided by histidine 41 and histidine 74. Histidine 41 and histidine 74 together coordinate isopentenyl diphosphate. Cysteine 96 contacts [4Fe-4S] cluster. Histidine 124 serves as a coordination point for (2E)-4-hydroxy-3-methylbut-2-enyl diphosphate. Histidine 124 contacts dimethylallyl diphosphate. Histidine 124 lines the isopentenyl diphosphate pocket. Residue glutamate 126 is the Proton donor of the active site. (2E)-4-hydroxy-3-methylbut-2-enyl diphosphate is bound at residue threonine 168. Cysteine 198 is a [4Fe-4S] cluster binding site. Residues serine 226, serine 227, asparagine 228, and serine 270 each coordinate (2E)-4-hydroxy-3-methylbut-2-enyl diphosphate. Dimethylallyl diphosphate contacts are provided by serine 226, serine 227, asparagine 228, and serine 270. The isopentenyl diphosphate site is built by serine 226, serine 227, asparagine 228, and serine 270.

This sequence belongs to the IspH family. Requires [4Fe-4S] cluster as cofactor.

It catalyses the reaction isopentenyl diphosphate + 2 oxidized [2Fe-2S]-[ferredoxin] + H2O = (2E)-4-hydroxy-3-methylbut-2-enyl diphosphate + 2 reduced [2Fe-2S]-[ferredoxin] + 2 H(+). The enzyme catalyses dimethylallyl diphosphate + 2 oxidized [2Fe-2S]-[ferredoxin] + H2O = (2E)-4-hydroxy-3-methylbut-2-enyl diphosphate + 2 reduced [2Fe-2S]-[ferredoxin] + 2 H(+). It functions in the pathway isoprenoid biosynthesis; dimethylallyl diphosphate biosynthesis; dimethylallyl diphosphate from (2E)-4-hydroxy-3-methylbutenyl diphosphate: step 1/1. The protein operates within isoprenoid biosynthesis; isopentenyl diphosphate biosynthesis via DXP pathway; isopentenyl diphosphate from 1-deoxy-D-xylulose 5-phosphate: step 6/6. Its function is as follows. Catalyzes the conversion of 1-hydroxy-2-methyl-2-(E)-butenyl 4-diphosphate (HMBPP) into a mixture of isopentenyl diphosphate (IPP) and dimethylallyl diphosphate (DMAPP). Acts in the terminal step of the DOXP/MEP pathway for isoprenoid precursor biosynthesis. This is 4-hydroxy-3-methylbut-2-enyl diphosphate reductase from Alcanivorax borkumensis (strain ATCC 700651 / DSM 11573 / NCIMB 13689 / SK2).